A 673-amino-acid polypeptide reads, in one-letter code: UvrABC system protein B (673 aa).

The Helicase ATP-binding domain maps to 25 to 413 (EGIESGLAHQ…GSDIAEQVVR (389 aa)). Residue 38-45 (GVTGSGKT) coordinates ATP. The short motif at 91–114 (YYDYYQPEAYVPTTDTFIEKDASV) is the Beta-hairpin element. Residues 430–583 (QVDDLLSEIN…QHQYNLDNNI (154 aa)) enclose the Helicase C-terminal domain. The UVR domain occupies 634–669 (DTKIVELEKLMQGHAQNLEFEQAAAMRDKIAKLRIQ).

It belongs to the UvrB family. In terms of assembly, forms a heterotetramer with UvrA during the search for lesions. Interacts with UvrC in an incision complex.

The protein localises to the cytoplasm. In terms of biological role, the UvrABC repair system catalyzes the recognition and processing of DNA lesions. A damage recognition complex composed of 2 UvrA and 2 UvrB subunits scans DNA for abnormalities. Upon binding of the UvrA(2)B(2) complex to a putative damaged site, the DNA wraps around one UvrB monomer. DNA wrap is dependent on ATP binding by UvrB and probably causes local melting of the DNA helix, facilitating insertion of UvrB beta-hairpin between the DNA strands. Then UvrB probes one DNA strand for the presence of a lesion. If a lesion is found the UvrA subunits dissociate and the UvrB-DNA preincision complex is formed. This complex is subsequently bound by UvrC and the second UvrB is released. If no lesion is found, the DNA wraps around the other UvrB subunit that will check the other stand for damage. The protein is UvrABC system protein B of Colwellia psychrerythraea (strain 34H / ATCC BAA-681) (Vibrio psychroerythus).